Reading from the N-terminus, the 502-residue chain is Maturase K (502 aa).

This sequence belongs to the intron maturase 2 family. MatK subfamily.

It is found in the plastid. The protein localises to the chloroplast. Functionally, usually encoded in the trnK tRNA gene intron. Probably assists in splicing its own and other chloroplast group II introns. In Fremontodendron californicum (California flannelbush), this protein is Maturase K.